The primary structure comprises 816 residues: Mechanosensitive cation channel TMEM63B (816 aa).

Topologically, residues 1 to 46 are extracellular; the sequence is MLPYVIATLGSAGSTCKASTCSNSTKDYCYSARIRSTVLQGLPFGG. The helical transmembrane segment at 47 to 71 threads the bilayer; that stretch reads VPTVLALDFMCFLALLFVFSILRKV. Residues Cys57 and Cys119 are each lipidated (S-palmitoyl cysteine). Residues 72–138 lie on the Cytoplasmic side of the membrane; it reads AWDYGRLALV…KDDEIRDKCG (67 aa). A helical transmembrane segment spans residues 139 to 171; sequence GDAVHYLSFQRHIIGLLVAVGVLSVGIVLPVNF. Residues 172-195 are Extracellular-facing; sequence SGDLLENNAYSFGRTTIANLNSGN. A helical membrane pass occupies residues 196–220; the sequence is NLLWLHTSFAFLYLLLTVYSMRRHT. Over 221–420 the chain is Cytoplasmic; that stretch reads SKMRYKEDDL…IYWEHLSIRG (200 aa). Residues 224–419 are intracellular linker IL2; confers mechanosensitivity; it reads RYKEDDLVKR…NIYWEHLSIR (196 aa). Residues Cys375 and Cys391 are each lipidated (S-palmitoyl cysteine). A helical transmembrane segment spans residues 421–450; it reads FIWWIRCLVINVVLFILLFFLTTPAIIITT. Topologically, residues 451-465 are extracellular; that stretch reads MDKFNVTKPVEYLNN. The helical transmembrane segment at 466-495 threads the bilayer; that stretch reads PIITQFFPTLLLWCFSALLPTIVYYSAFFE. Over 496–499 the chain is Cytoplasmic; that stretch reads AHWT. A helical membrane pass occupies residues 500 to 536; it reads RSGENRTTMHKCYTFLIFMVLLLPSLGLSSLDVFFRW. The Extracellular segment spans residues 537–559; that stretch reads LFDKKFLAEAAVRFECVFLPDNG. The chain crosses the membrane as a helical span at residues 560–592; that stretch reads AFFVNYVIASAFIGNAMDLLRIPGLLMYMIRLC. The gating helix stretch occupies residues 560-592; that stretch reads AFFVNYVIASAFIGNAMDLLRIPGLLMYMIRLC. Residues 593–612 lie on the Cytoplasmic side of the membrane; that stretch reads LARSAAERRNVKRHQAYEFQ. Residues 613-631 form a helical membrane-spanning segment; sequence FGAAYAWMMCVFTVVMTYS. The Extracellular segment spans residues 632–634; the sequence is ITC. Residues 635–659 traverse the membrane as a helical segment; it reads PIIVPFGLMYMLLKHLVDRYNLYYA. The Cytoplasmic segment spans residues 660 to 666; that stretch reads YLPAKLD. Residues 667-695 form a helical membrane-spanning segment; sequence KKIHSGAVNQVVAAPILCLFWLLFFSTMR. Over 696–700 the chain is Extracellular; it reads TGFLA. Residues 701–721 traverse the membrane as a helical segment; the sequence is PTSMFTFVVLVITIVICLCHV. S-palmitoyl cysteine attachment occurs at residues Cys719 and Cys722. Residues 722–816 lie on the Cytoplasmic side of the membrane; it reads CFGHFKYLSA…DSLIENEIRQ (95 aa).

This sequence belongs to the CSC1 (TC 1.A.17) family. In terms of assembly, monomer. Post-translationally, palmitoylation is required for localization to the plasma membrane and stability.

It localises to the cell membrane. Its subcellular location is the lysosome membrane. The protein localises to the early endosome membrane. It carries out the reaction Ca(2+)(in) = Ca(2+)(out). The enzyme catalyses Mg(2+)(in) = Mg(2+)(out). It catalyses the reaction K(+)(in) = K(+)(out). The catalysed reaction is Na(+)(in) = Na(+)(out). It carries out the reaction Cs(+)(in) = Cs(+)(out). Functionally, mechanosensitive cation channel with low conductance and high activation threshold. Osmosensitive cation channel preferentially activated by hypotonic stress. Also acts as a phospholipid scramblase in response to changes in membrane structure: upon changes in membrane curvature and thickness, alters its conformation and translocates phospholipids, thereby controlling plasma membrane lipid distribution. In Gallus gallus (Chicken), this protein is Mechanosensitive cation channel TMEM63B.